A 609-amino-acid polypeptide reads, in one-letter code: Membrane protein insertase YidC (609 aa).

A helical transmembrane segment spans residues 9–29 (IIAIVLSGLILIAWQYFYNIP). Residues 35 to 63 (RAAQQAQSQTAKSPTEPTPNSPKPDHPAA) are disordered. The next 4 membrane-spanning stretches (helical) occupy residues 375–395 (VFGNFGIAILFVTVLIKAIFF), 449–469 (LPMVLQIPVFFSLYKVLFVTI), 507–527 (LLGPYLAIGAWPIIMGITMWF), and 546–566 (WMPVIFTFMLAAFPAGLVIYW).

It belongs to the OXA1/ALB3/YidC family. Type 1 subfamily. As to quaternary structure, interacts with the Sec translocase complex via SecD. Specifically interacts with transmembrane segments of nascent integral membrane proteins during membrane integration.

It is found in the cell inner membrane. Its function is as follows. Required for the insertion and/or proper folding and/or complex formation of integral membrane proteins into the membrane. Involved in integration of membrane proteins that insert both dependently and independently of the Sec translocase complex, as well as at least some lipoproteins. Aids folding of multispanning membrane proteins. The chain is Membrane protein insertase YidC from Nitrobacter hamburgensis (strain DSM 10229 / NCIMB 13809 / X14).